We begin with the raw amino-acid sequence, 446 residues long: Transcription factor Sox-10 (446 aa).

Disordered stretches follow at residues 1 to 60 (MSDD…SEDE), 153 to 191 (RLRM…AEGG), and 203 to 264 (HLDH…IDFG). Over residues 36-48 (DDDDDDDEEEEEE) the composition is skewed to acidic residues. A Glycyl lysine isopeptide (Lys-Gly) (interchain with G-Cter in SUMO) cross-link involves residue Lys-52. A dimerization (DIM) region spans residues 56–96 (DSEDERFPVCIREAVSQVLNGYDWTLVPMPVRVNGGSKSKP). The HMG box DNA-binding region spans 98-166 (VKRPMNAFMV…QHKKDHPDYK (69 aa)). Over residues 153–167 (RLRMQHKKDHPDYKY) the composition is skewed to basic and acidic residues. A compositionally biased stretch (polar residues) spans 213–226 (SDGNSEHSTGQSHG). The transactivation domain (TAM) stretch occupies residues 217–303 (SEHSTGQSHG…NGHAGHPSHI (87 aa)). Positions 243–257 (SDGKRDGSHALREGG) are enriched in basic and acidic residues. A transactivation domain (TAC) region spans residues 337 to 446 (KAQVKTESSS…QPVYTTLSRP (110 aa)). Lys-341 participates in a covalent cross-link: Glycyl lysine isopeptide (Lys-Gly) (interchain with G-Cter in SUMO). The disordered stretch occupies residues 421–446 (SDPPSVAQSHSPTHWEQPVYTTLSRP). Over residues 426 to 446 (VAQSHSPTHWEQPVYTTLSRP) the composition is skewed to polar residues.

As to quaternary structure, interacts with the sumoylation factors ube2i/ubc9 and sumo1. Sumoylated. In terms of tissue distribution, first expressed at stages 13/14 at the lateral edges of the neural plate, in the neural crest forming region. By stage 22, neural crest cells migrate in the cranial region and strong expression is seen in the crest cells that populate the branchial arches as well as those migrating in the frontonasal region. Also strongly expressed in the trunk neural crest. Expression in the otic vesicle begins around stage 25 and persists until at least stage 40. At stage 30, expression is down-regulated in the cranial neural crest of the pharyngeal arches but persists in the trunk neural crest, in the otic vesicle and in discrete domains adjacent to the hindbrain. At stage 40, expression is restricted to the otic vesicle, differentiated pigment cells, and in several cranial ganglia.

Its subcellular location is the cytoplasm. It is found in the nucleus. Its function is as follows. Acts early in neural crest formation, functioning redundantly with the other group E Sox factors sox8 and sox9 to induce neural crest progenitors. Acts downstream of wnt-signaling at the neural plate border. Involved in the specification of neural crest progenitors fated to form the pigment cell lineage. In Xenopus laevis (African clawed frog), this protein is Transcription factor Sox-10 (sox10).